We begin with the raw amino-acid sequence, 309 residues long: Taste receptor type 2 member 20 (309 aa).

Residues 1 to 6 are Extracellular-facing; that stretch reads MMSFLH. The helical transmembrane segment at 7-27 threads the bilayer; it reads IVFSILVVVAFILGNFANGFI. Over 28–46 the chain is Cytoplasmic; the sequence is ALINFIAWVKRQKISSADQ. A helical transmembrane segment spans residues 47–67; the sequence is IIAALAVSRVGLLWVILLHWY. The Extracellular portion of the chain corresponds to 68–79; sequence STVLNPTSSNLK. A helical membrane pass occupies residues 80 to 100; the sequence is VIIFISNAWAVTNHFSIWLAT. Residues 101 to 125 lie on the Cytoplasmic side of the membrane; the sequence is SLSIFYLLKIVNFSRLIFHHLKRKA. The chain crosses the membrane as a helical span at residues 126–146; the sequence is KSVVLVIVLGSLFFLVCXLVM. Over 147-178 the chain is Extracellular; it reads KNTYINVWTEECEGNVTWKIKLRNAMHLSNLT. Residues 179–199 form a helical membrane-spanning segment; it reads VAMLANLIPFTLTLISFLLLI. The Cytoplasmic segment spans residues 200 to 229; the sequence is YSLCKHLKKMQLHGKGSQDPSTKIHIKALQ. The helical transmembrane segment at 230 to 250 threads the bilayer; it reads TVTSFLILLAIYFLCLITSFW. The Extracellular segment spans residues 251 to 259; the sequence is NSKMRPKEI. Residues 260-280 form a helical membrane-spanning segment; it reads VLMLCQAFGIIYPSFHSFILI. Over 281-309 the chain is Cytoplasmic; that stretch reads WGNKTLKQTFLSVLWQVTCWAKGQNQSTP.

The protein belongs to the G-protein coupled receptor T2R family.

The protein localises to the membrane. Functionally, receptor that may play a role in the perception of bitterness and is gustducin-linked. May play a role in sensing the chemical composition of the gastrointestinal content. The activity of this receptor may stimulate alpha gustducin, mediate PLC-beta-2 activation and lead to the gating of TRPM5. The protein is Taste receptor type 2 member 20 (TAS2R20) of Pan troglodytes (Chimpanzee).